Reading from the N-terminus, the 817-residue chain is Phosphoenolpyruvate synthase (817 aa).

His-442 serves as the catalytic Tele-phosphohistidine intermediate. The substrate site is built by Arg-540, Arg-587, Glu-684, Gly-706, Thr-707, Asn-708, and Asp-709. Residue Glu-684 coordinates Mg(2+). Asp-709 serves as a coordination point for Mg(2+). The active-site Proton donor is Cys-756.

The protein belongs to the PEP-utilizing enzyme family. As to quaternary structure, homooctamer. Mg(2+) is required as a cofactor.

The catalysed reaction is pyruvate + ATP + H2O = phosphoenolpyruvate + AMP + phosphate + 2 H(+). It functions in the pathway carbohydrate biosynthesis; gluconeogenesis. Functionally, catalyzes the phosphorylation of pyruvate to phosphoenolpyruvate. This is Phosphoenolpyruvate synthase (ppsA) from Pyrococcus furiosus (strain ATCC 43587 / DSM 3638 / JCM 8422 / Vc1).